The sequence spans 208 residues: MSSLGRLHLITDNRPGQDPLAVVRAALSVARAELVVQVRVTDETTDRQAYDLARRVTVLCARYGATCLVNDRLHVALAVGADGGHVGADDLPVGAARAVLGSAAVLGATAREADTAVEAVAAGASYLGVGSVHPTTSKDGLPPPIGAAGLRAVAAAVSVPVIAIGGVTAADVPDLRAAGAYGVAVIAALSHAADPARATAAFVEALTC.

Residues Gln37–Arg39 and Asn70 contribute to the 4-amino-2-methyl-5-(diphosphooxymethyl)pyrimidine site. Positions 71 and 90 each coordinate Mg(2+). 4-amino-2-methyl-5-(diphosphooxymethyl)pyrimidine is bound at residue Thr109. Thr135–Ser137 contributes to the 2-[(2R,5Z)-2-carboxy-4-methylthiazol-5(2H)-ylidene]ethyl phosphate binding site. A 4-amino-2-methyl-5-(diphosphooxymethyl)pyrimidine-binding site is contributed by Lys138. Gly166 contacts 2-[(2R,5Z)-2-carboxy-4-methylthiazol-5(2H)-ylidene]ethyl phosphate.

It belongs to the thiamine-phosphate synthase family. The cofactor is Mg(2+).

The catalysed reaction is 2-[(2R,5Z)-2-carboxy-4-methylthiazol-5(2H)-ylidene]ethyl phosphate + 4-amino-2-methyl-5-(diphosphooxymethyl)pyrimidine + 2 H(+) = thiamine phosphate + CO2 + diphosphate. The enzyme catalyses 2-(2-carboxy-4-methylthiazol-5-yl)ethyl phosphate + 4-amino-2-methyl-5-(diphosphooxymethyl)pyrimidine + 2 H(+) = thiamine phosphate + CO2 + diphosphate. It catalyses the reaction 4-methyl-5-(2-phosphooxyethyl)-thiazole + 4-amino-2-methyl-5-(diphosphooxymethyl)pyrimidine + H(+) = thiamine phosphate + diphosphate. Its pathway is cofactor biosynthesis; thiamine diphosphate biosynthesis; thiamine phosphate from 4-amino-2-methyl-5-diphosphomethylpyrimidine and 4-methyl-5-(2-phosphoethyl)-thiazole: step 1/1. Functionally, condenses 4-methyl-5-(beta-hydroxyethyl)thiazole monophosphate (THZ-P) and 2-methyl-4-amino-5-hydroxymethyl pyrimidine pyrophosphate (HMP-PP) to form thiamine monophosphate (TMP). The chain is Thiamine-phosphate synthase from Salinispora arenicola (strain CNS-205).